We begin with the raw amino-acid sequence, 324 residues long: N-acetylmuramoyl-L-alanine amidase sle1 (324 aa).

The N-terminal stretch at 1–25 (MQKKYITAIIGTTALSALASTHAQA) is a signal peptide. LysM domains are found at residues 27-70 (TTHT…VLKV), 84-127 (TVYT…KLKV), and 147-190 (ATYT…KLKV). The region spanning 200–324 (SNNTRSNGGY…YQVRNYKFIH (125 aa)) is the Peptidase C51 domain.

It localises to the secreted. The protein resides in the cell surface. The enzyme catalyses Hydrolyzes the link between N-acetylmuramoyl residues and L-amino acid residues in certain cell-wall glycopeptides.. Its function is as follows. Peptidoglycan hydrolase involved in the splitting of the septum during cell division. The chain is N-acetylmuramoyl-L-alanine amidase sle1 (sle1) from Staphylococcus epidermidis (strain ATCC 12228 / FDA PCI 1200).